Reading from the N-terminus, the 385-residue chain is Succinyl-diaminopimelate desuccinylase (385 aa).

A Zn(2+)-binding site is contributed by His-78. Asp-80 is a catalytic residue. Residue Asp-110 coordinates Zn(2+). Residue Glu-144 is the Proton acceptor of the active site. Residues Glu-145, Glu-173, and His-358 each contribute to the Zn(2+) site.

This sequence belongs to the peptidase M20A family. DapE subfamily. As to quaternary structure, homodimer. Zn(2+) serves as cofactor. It depends on Co(2+) as a cofactor.

The catalysed reaction is N-succinyl-(2S,6S)-2,6-diaminopimelate + H2O = (2S,6S)-2,6-diaminopimelate + succinate. It participates in amino-acid biosynthesis; L-lysine biosynthesis via DAP pathway; LL-2,6-diaminopimelate from (S)-tetrahydrodipicolinate (succinylase route): step 3/3. Functionally, catalyzes the hydrolysis of N-succinyl-L,L-diaminopimelic acid (SDAP), forming succinate and LL-2,6-diaminopimelate (DAP), an intermediate involved in the bacterial biosynthesis of lysine and meso-diaminopimelic acid, an essential component of bacterial cell walls. This is Succinyl-diaminopimelate desuccinylase from Gluconacetobacter diazotrophicus (strain ATCC 49037 / DSM 5601 / CCUG 37298 / CIP 103539 / LMG 7603 / PAl5).